Reading from the N-terminus, the 222-residue chain is MSSNNSNQDNFIRFALEAKVLSFGEFKTKAGRLSPYFFNAGEFNDGAHLSALGRYYSKALQESKLQFDMLYGPAYKGITLAAATAIALVDDGINVPYAYNRKEAKDHGEGGVLVGASVKGRVVIIDDVISAGTSVGESVDLIRKAGAEPAAVLIALDRMERSGNAVDIGDKSAVQAVEQEFGLPVISIANLAGLMSFLTASSDTQLTNYLPAVKAYREKYGI.

A 5-phospho-alpha-D-ribose 1-diphosphate-binding site is contributed by Lys29. 37–38 lines the orotate pocket; it reads FF. 5-phospho-alpha-D-ribose 1-diphosphate-binding positions include 75–76, Arg101, Lys102, Lys105, His107, and 126–134; these read YK and DDVISAGTS. Orotate is bound by residues Ser130 and Arg158.

The protein belongs to the purine/pyrimidine phosphoribosyltransferase family. PyrE subfamily. As to quaternary structure, homodimer. Mg(2+) is required as a cofactor.

The enzyme catalyses orotidine 5'-phosphate + diphosphate = orotate + 5-phospho-alpha-D-ribose 1-diphosphate. It participates in pyrimidine metabolism; UMP biosynthesis via de novo pathway; UMP from orotate: step 1/2. Catalyzes the transfer of a ribosyl phosphate group from 5-phosphoribose 1-diphosphate to orotate, leading to the formation of orotidine monophosphate (OMP). In Polynucleobacter necessarius subsp. necessarius (strain STIR1), this protein is Orotate phosphoribosyltransferase.